Consider the following 71-residue polypeptide: Small ribosomal subunit protein bS18 (71 aa).

Belongs to the bacterial ribosomal protein bS18 family. Part of the 30S ribosomal subunit. Forms a tight heterodimer with protein bS6.

Functionally, binds as a heterodimer with protein bS6 to the central domain of the 16S rRNA, where it helps stabilize the platform of the 30S subunit. The polypeptide is Small ribosomal subunit protein bS18 (Synechococcus sp. (strain JA-2-3B'a(2-13)) (Cyanobacteria bacterium Yellowstone B-Prime)).